A 71-amino-acid chain; its full sequence is NAD(P)H-quinone oxidoreductase subunit O (71 aa).

The protein belongs to the complex I NdhO subunit family. As to quaternary structure, NDH-1 can be composed of about 15 different subunits; different subcomplexes with different compositions have been identified which probably have different functions.

It localises to the cellular thylakoid membrane. The catalysed reaction is a plastoquinone + NADH + (n+1) H(+)(in) = a plastoquinol + NAD(+) + n H(+)(out). It carries out the reaction a plastoquinone + NADPH + (n+1) H(+)(in) = a plastoquinol + NADP(+) + n H(+)(out). In terms of biological role, NDH-1 shuttles electrons from an unknown electron donor, via FMN and iron-sulfur (Fe-S) centers, to quinones in the respiratory and/or the photosynthetic chain. The immediate electron acceptor for the enzyme in this species is believed to be plastoquinone. Couples the redox reaction to proton translocation, and thus conserves the redox energy in a proton gradient. Cyanobacterial NDH-1 also plays a role in inorganic carbon-concentration. This is NAD(P)H-quinone oxidoreductase subunit O from Nostoc punctiforme (strain ATCC 29133 / PCC 73102).